The primary structure comprises 252 residues: tRNA (guanine-N(1)-)-methyltransferase (252 aa).

S-adenosyl-L-methionine contacts are provided by residues Gly-113 and 133 to 138; that span reads VGDFVL.

This sequence belongs to the RNA methyltransferase TrmD family. As to quaternary structure, homodimer.

The protein localises to the cytoplasm. The catalysed reaction is guanosine(37) in tRNA + S-adenosyl-L-methionine = N(1)-methylguanosine(37) in tRNA + S-adenosyl-L-homocysteine + H(+). Its function is as follows. Specifically methylates guanosine-37 in various tRNAs. The sequence is that of tRNA (guanine-N(1)-)-methyltransferase from Francisella tularensis subsp. holarctica (strain FTNF002-00 / FTA).